The following is an 88-amino-acid chain: Small ribosomal subunit protein bS16 (88 aa).

The protein belongs to the bacterial ribosomal protein bS16 family.

This Pelotomaculum thermopropionicum (strain DSM 13744 / JCM 10971 / SI) protein is Small ribosomal subunit protein bS16.